We begin with the raw amino-acid sequence, 876 residues long: Alanine--tRNA ligase (876 aa).

Residues H565, H569, C667, and H671 each contribute to the Zn(2+) site.

This sequence belongs to the class-II aminoacyl-tRNA synthetase family. Zn(2+) is required as a cofactor.

It localises to the cytoplasm. The catalysed reaction is tRNA(Ala) + L-alanine + ATP = L-alanyl-tRNA(Ala) + AMP + diphosphate. In terms of biological role, catalyzes the attachment of alanine to tRNA(Ala) in a two-step reaction: alanine is first activated by ATP to form Ala-AMP and then transferred to the acceptor end of tRNA(Ala). Also edits incorrectly charged Ser-tRNA(Ala) and Gly-tRNA(Ala) via its editing domain. The chain is Alanine--tRNA ligase from Staphylococcus aureus (strain MSSA476).